The chain runs to 541 residues: Chaperonin GroEL 2 (541 aa).

ATP contacts are provided by residues 29–32 (TLGP), 86–90 (DGTTT), glycine 413, 476–478 (NAA), and aspartate 492.

This sequence belongs to the chaperonin (HSP60) family. In terms of assembly, forms a cylinder of 14 subunits composed of two heptameric rings stacked back-to-back. Interacts with the co-chaperonin GroES.

It localises to the cytoplasm. It carries out the reaction ATP + H2O + a folded polypeptide = ADP + phosphate + an unfolded polypeptide.. Its function is as follows. Together with its co-chaperonin GroES, plays an essential role in assisting protein folding. The GroEL-GroES system forms a nano-cage that allows encapsulation of the non-native substrate proteins and provides a physical environment optimized to promote and accelerate protein folding. The protein is Chaperonin GroEL 2 of Streptomyces avermitilis (strain ATCC 31267 / DSM 46492 / JCM 5070 / NBRC 14893 / NCIMB 12804 / NRRL 8165 / MA-4680).